A 129-amino-acid polypeptide reads, in one-letter code: D-ribose pyranase 2 (129 aa).

Catalysis depends on His-20, which acts as the Proton donor. Residues Asp-28, His-96, and 118–120 (YAN) contribute to the substrate site.

Belongs to the RbsD / FucU family. RbsD subfamily. As to quaternary structure, homodecamer.

The protein localises to the cytoplasm. It catalyses the reaction beta-D-ribopyranose = beta-D-ribofuranose. It functions in the pathway carbohydrate metabolism; D-ribose degradation; D-ribose 5-phosphate from beta-D-ribopyranose: step 1/2. Functionally, catalyzes the interconversion of beta-pyran and beta-furan forms of D-ribose. This is D-ribose pyranase 2 from Streptomyces griseus subsp. griseus (strain JCM 4626 / CBS 651.72 / NBRC 13350 / KCC S-0626 / ISP 5235).